We begin with the raw amino-acid sequence, 435 residues long: ATP-dependent RNA helicase SUB2 (435 aa).

Residues 1 to 40 (MSHEGQEELLDYSDSEEIAVPTTTAPSAAAGEGANDKEAD) are disordered. Over residues 7 to 17 (EELLDYSDSEE) the composition is skewed to acidic residues. Positions 19–33 (AVPTTTAPSAAAGEG) are enriched in low complexity. Residues 51-79 (TGFRDFLLKPELLRAIGDCGFEHPSEVQQ) carry the Q motif motif. In terms of domain architecture, Helicase ATP-binding spans 82–257 (IPQSILGTDV…KKFMQNPLEI (176 aa)). Residue 95–102 (AKSGLGKT) participates in ATP binding. The DECD box signature appears at 204–207 (DECD). Residues 269 to 430 (GLQQYYIKLD…EFPEEGVDPS (162 aa)) form the Helicase C-terminal domain.

It belongs to the DEAD box helicase family. DECD subfamily.

The protein localises to the nucleus. The enzyme catalyses ATP + H2O = ADP + phosphate + H(+). ATP-binding RNA helicase involved in transcription elongation and required for the export of mRNA out of the nucleus. SUB2 also plays a role in pre-mRNA splicing and spliceosome assembly. May be involved in rDNA and telomeric silencing, and maintenance of genome integrity. This chain is ATP-dependent RNA helicase SUB2 (SUB2), found in Debaryomyces hansenii (strain ATCC 36239 / CBS 767 / BCRC 21394 / JCM 1990 / NBRC 0083 / IGC 2968) (Yeast).